The chain runs to 228 residues: MTKWNYGVFFLNFYHVGQQEPSLTMSNALETLRIIDEDTSIYDVVAFSEHHIDKSYNDETKLAPFVSLGKQIHILATSPETVVKAAKYGMPLLFKWDDSQQKRIELLNHYQAAAAKFNVDIAGVRHRLMLFVNVNDNPTQAKAELSIYLEDYLSYTQAETSIDEIINSNAAGNFDTCLHHVAEMAQGLNNKVDFLFCFESMKDQENKKSLMINFDKRVINYRKEHNLN.

This sequence belongs to the bacterial luciferase oxidoreductase family. Homodimer. FMN is required as a cofactor.

The chain is Non-fluorescent flavoprotein (luxF) from Photobacterium leiognathi.